The following is a 137-amino-acid chain: ATP synthase epsilon chain (137 aa).

This sequence belongs to the ATPase epsilon chain family. F-type ATPases have 2 components, CF(1) - the catalytic core - and CF(0) - the membrane proton channel. CF(1) has five subunits: alpha(3), beta(3), gamma(1), delta(1), epsilon(1). CF(0) has three main subunits: a, b and c.

The protein resides in the cell inner membrane. In terms of biological role, produces ATP from ADP in the presence of a proton gradient across the membrane. This Magnetococcus marinus (strain ATCC BAA-1437 / JCM 17883 / MC-1) protein is ATP synthase epsilon chain.